We begin with the raw amino-acid sequence, 140 residues long: Endoribonuclease YbeY (140 aa).

Residues histidine 101, histidine 105, and histidine 111 each coordinate Zn(2+).

It belongs to the endoribonuclease YbeY family. The cofactor is Zn(2+).

Its subcellular location is the cytoplasm. Single strand-specific metallo-endoribonuclease involved in late-stage 70S ribosome quality control and in maturation of the 3' terminus of the 16S rRNA. The chain is Endoribonuclease YbeY from Aliarcobacter butzleri (strain RM4018) (Arcobacter butzleri).